The chain runs to 388 residues: Chorismate synthase (388 aa).

Residues Arg39 and Arg45 each contribute to the NADP(+) site. Residues 130-132 (RSS), 251-252 (NA), Gly296, 311-315 (KPIPT), and Arg337 contribute to the FMN site.

This sequence belongs to the chorismate synthase family. As to quaternary structure, homotetramer. The cofactor is FMNH2.

The catalysed reaction is 5-O-(1-carboxyvinyl)-3-phosphoshikimate = chorismate + phosphate. Its pathway is metabolic intermediate biosynthesis; chorismate biosynthesis; chorismate from D-erythrose 4-phosphate and phosphoenolpyruvate: step 7/7. Functionally, catalyzes the anti-1,4-elimination of the C-3 phosphate and the C-6 proR hydrogen from 5-enolpyruvylshikimate-3-phosphate (EPSP) to yield chorismate, which is the branch point compound that serves as the starting substrate for the three terminal pathways of aromatic amino acid biosynthesis. This reaction introduces a second double bond into the aromatic ring system. This chain is Chorismate synthase, found in Streptococcus pyogenes serotype M49 (strain NZ131).